Reading from the N-terminus, the 248-residue chain is MSIVNISCYKFVTLNDREALKADLGARCLQLGLRGTILLAPEGINVFLAGTRAAIDAIVAGLRADPRFADLEPKLSLSAEAPFTRMRVRLKKEIITMKMPVVRPEEGRAPAVAAATLKRWLDQGCDDEGRPVVMLDTRNDYEVAAGSFENAVDYGIGVFSEFPPQLQRRRDDYAGKTVVSFCTGGIRCEKAAIHMQEIGVERVYQLEGGILKYFEEVGGAHYRGGCFVFDAREAVGADLQPLGGRVHC.

Residues 128–222 (EGRPVVMLDT…YFEEVGGAHY (95 aa)) form the Rhodanese domain. The Cysteine persulfide intermediate role is filled by cysteine 182.

Belongs to the TrhO family.

The enzyme catalyses uridine(34) in tRNA + AH2 + O2 = 5-hydroxyuridine(34) in tRNA + A + H2O. In terms of biological role, catalyzes oxygen-dependent 5-hydroxyuridine (ho5U) modification at position 34 in tRNAs. The polypeptide is tRNA uridine(34) hydroxylase (Thiobacillus denitrificans (strain ATCC 25259 / T1)).